The primary structure comprises 190 residues: GTP cyclohydrolase 1 (190 aa).

Residues cysteine 78, histidine 81, and cysteine 150 each coordinate Zn(2+).

This sequence belongs to the GTP cyclohydrolase I family. Toroid-shaped homodecamer, composed of two pentamers of five dimers.

It carries out the reaction GTP + H2O = 7,8-dihydroneopterin 3'-triphosphate + formate + H(+). Its pathway is cofactor biosynthesis; 7,8-dihydroneopterin triphosphate biosynthesis; 7,8-dihydroneopterin triphosphate from GTP: step 1/1. With respect to regulation, k(+) ions moderately increases the Vmax, whereas UTP and Ca(2+) and Mg(2+) ions drastically increase the Km for GTP. This Bacillus subtilis (strain 168) protein is GTP cyclohydrolase 1 (folE).